Here is a 118-residue protein sequence, read N- to C-terminus: Thioredoxin AMT13 (118 aa).

The Thioredoxin domain maps to 1–110 (MSDNKAIQTL…LEDAIRANLG (110 aa)). An intrachain disulfide couples Cys36 to Cys39.

Belongs to the thioredoxin family.

The protein operates within mycotoxin biosynthesis. Functionally, thioredoxin; part of the gene clusters that mediate the biosynthesis of AM-toxins, host-selective toxins (HSTs) causing Alternaria blotch on apple, a worldwide distributed disease. AM-toxins are cyclic depsipeptides containing the 3 residues 2-hydroxy-isovaleric acid (2-HIV), dehydroalanine, L-alanine which are common for all 3 AM-toxins I to III. The fourth precursor is L-alpha-amino-methoxyphenyl-valeric acid (L-Amv) for AM-toxin I, L-alpha-amino-phenyl-valeric acid (L-Apv) for AM-toxin II, and L-alpha-amino-hydroxyphenyl-valeric acid (L-Ahv) for AM-toxin III. AM-toxins have two target sites for affecting susceptible apple cells; they cause invagination of the plasma membrane and electrolyte loss and chloroplast disorganization. The non-ribosomal peptide synthetase AMT1 contains 4 catalytic modules and is responsible for activation of each residue in AM-toxin. The aldo-keto reductase AMT2 catalyzes the conversion of 2-keto-isovaleric acid (2-KIV) to 2-hydroxy-isovaleric acid (2-HIV), one of the precursor residues incorporated by AMT1 during AM-toxin biosynthesis, by reduction of its ketone to an alcohol. The cytochrome P450 monooxygenase AMT3 and the thioesterase AMT4 are also important for AM-toxin production, but their exact function within the AM-toxin biosynthesis are not known yet. Up to 21 proteins (including AMT1 to AMT4) are predicted to be involved in AM-toxin biosynthesis since their expression ishighly up-regulated in AM-toxin-producing cultures. The chain is Thioredoxin AMT13 from Alternaria alternata (Alternaria rot fungus).